The primary structure comprises 204 residues: MTGRRTVSLHVGPVGLCGVDEAGRGPLAGPVVAAAVMLDPKRPIKGLRDSKKLTPAARERLADEIRARALAWCVAEASVAEIDRLNILHATMLAMQRAVAGMSHAPDDVWVDGDRCPEWTWRSQAVVQGDDKVAAIAAASILAKTVRDELMRGLHEAYPLYGFAQHMGYATAAHLAALKANGACPHHRRSFAPVRLLLDQTSLF.

Residues 14–203 (VGLCGVDEAG…VRLLLDQTSL (190 aa)) enclose the RNase H type-2 domain. Positions 20, 21, and 112 each coordinate a divalent metal cation.

Belongs to the RNase HII family. Requires Mn(2+) as cofactor. It depends on Mg(2+) as a cofactor.

The protein resides in the cytoplasm. The catalysed reaction is Endonucleolytic cleavage to 5'-phosphomonoester.. Its function is as follows. Endonuclease that specifically degrades the RNA of RNA-DNA hybrids. This chain is Ribonuclease HII, found in Thiobacillus denitrificans (strain ATCC 25259 / T1).